The sequence spans 321 residues: MPLLPAALTSSMLYFQMVIMAGTVMLAYYFEYTDTFTVNVQGFFCHDSAYRKPYPGPEDSSAVPPVLLYSLAAGVPVLVIIVGETAVFCLQLATRDFENQEKTILTGDCCYINPLVRRTVRFLGIYTFGLFATDIFVNAGQVVTGNLAPHFLALCKPNYTALGCQQYTQFISGEEACTGNPDLIMRARKTFPSKEAALSVYAAMYLTMYITNTIKAKGTRLAKPVLCLGLMCLAFLTGLNRVAEYRNHWSDVIAGFLVGISIAVFLVVCVVNNFKGRQAENEHIHMDNLAQMPMISIPRVESPLEKVTSVQNHITAFAEVT.

6 helical membrane passes run 10-30 (SSML…AYYF), 62-82 (AVPP…VIIV), 122-142 (FLGI…AGQV), 196-213 (AALS…ITNT), 225-245 (VLCL…VAEY), and 252-272 (VIAG…CVVN).

This sequence belongs to the PA-phosphatase related phosphoesterase family. As to expression, isoform 1 is expressed in brain, lung, kidney and colon. Isoform 2 is expressed in placenta, skeletal muscle and kidney.

Its subcellular location is the cell membrane. Its function is as follows. Induces filopodia formation and promotes neurite growth in a CDC42-independent manner; impedes neurite growth inhibitory-mediated axonal retraction. In Homo sapiens (Human), this protein is Phospholipid phosphatase-related protein type 5.